Consider the following 241-residue polypeptide: GTP cyclohydrolase 1 (241 aa).

The propeptide occupies 1–11 (MEKPRGVRCTN). The interval 1–58 (MEKPRGVRCTNGFPERELPRPGASRPAEKSRPPEAKGAQPADAWKAGRPRSEEDNELN) is disordered. 2 positions are modified to phosphoserine: Ser51 and Ser72. Positions 132, 135, and 203 each coordinate Zn(2+).

Belongs to the GTP cyclohydrolase I family. In terms of assembly, toroid-shaped homodecamer, composed of two pentamers of five dimers. Interacts with AHSA1 and GCHFR/GFRP. In terms of processing, phosphorylated.

Its subcellular location is the cytoplasm. It localises to the nucleus. The enzyme catalyses GTP + H2O = 7,8-dihydroneopterin 3'-triphosphate + formate + H(+). The protein operates within cofactor biosynthesis; 7,8-dihydroneopterin triphosphate biosynthesis; 7,8-dihydroneopterin triphosphate from GTP: step 1/1. Its activity is regulated as follows. GTP shows a positive allosteric effect, and tetrahydrobiopterin inhibits the enzyme activity. Zinc is required for catalytic activity. Inhibited by Mg(2+). Its function is as follows. May positively regulate nitric oxide synthesis in endothelial cells. May be involved in dopamine synthesis. May modify pain sensitivity and persistence. The sequence is that of GTP cyclohydrolase 1 (Gch1) from Rattus norvegicus (Rat).